The primary structure comprises 132 residues: Small ribosomal subunit protein uS8 (132 aa).

This sequence belongs to the universal ribosomal protein uS8 family. Part of the 30S ribosomal subunit. Contacts proteins S5 and S12.

In terms of biological role, one of the primary rRNA binding proteins, it binds directly to 16S rRNA central domain where it helps coordinate assembly of the platform of the 30S subunit. The protein is Small ribosomal subunit protein uS8 of Flavobacterium psychrophilum (strain ATCC 49511 / DSM 21280 / CIP 103535 / JIP02/86).